The sequence spans 172 residues: Transcriptional repressor NrdR (172 aa).

Residues 3 to 34 (CPFCRHPDSRVVDSRTTDDGTSIRRRRQCPDC) fold into a zinc finger. An ATP-cone domain is found at 46 to 136 (LMVIKRSGVT…VYRAFDSLED (91 aa)). The tract at residues 152–172 (ERSGGGTCGTGTVPVPAGTAD) is disordered. A compositionally biased stretch (low complexity) spans 161-172 (TGTVPVPAGTAD).

The protein belongs to the NrdR family. Requires Zn(2+) as cofactor.

In terms of biological role, negatively regulates transcription of bacterial ribonucleotide reductase nrd genes and operons by binding to NrdR-boxes. The chain is Transcriptional repressor NrdR from Streptomyces clavuligerus.